The sequence spans 246 residues: Proteasome subunit alpha type-6-B (246 aa).

The protein belongs to the peptidase T1A family. As to quaternary structure, component of the 20S core complex of the 26S proteasome. The 26S proteasome is composed of a core protease (CP), known as the 20S proteasome, capped at one or both ends by the 19S regulatory particle (RP/PA700). The 20S proteasome core is composed of 28 subunits that are arranged in four stacked rings, resulting in a barrel-shaped structure. The two end rings are each formed by seven alpha subunits, and the two central rings are each formed by seven beta subunits. The catalytic chamber with the active sites is on the inside of the barrel.

It is found in the cytoplasm. The protein resides in the nucleus. In terms of biological role, the proteasome is a multicatalytic proteinase complex which is characterized by its ability to cleave peptides with Arg, Phe, Tyr, Leu, and Glu adjacent to the leaving group at neutral or slightly basic pH. The proteasome has an ATP-dependent proteolytic activity. The polypeptide is Proteasome subunit alpha type-6-B (PAA2) (Arabidopsis thaliana (Mouse-ear cress)).